The chain runs to 503 residues: Trehalose-6-phosphate synthase (503 aa).

Polar residues predominate over residues 1–14; sequence MTDQSGNGVRSGSA. Residues 1–20 form a disordered region; sequence MTDQSGNGVRSGSASEAPPS. Arg-31 is a binding site for D-glucose 6-phosphate. 51–52 contributes to the UDP-alpha-D-glucose binding site; that stretch reads GG. D-glucose 6-phosphate is bound by residues Tyr-109 and Asp-163. Residues Arg-305 and Lys-310 each coordinate UDP-alpha-D-glucose. Arg-343 is a binding site for D-glucose 6-phosphate. Position 408 to 412 (408 to 412) interacts with UDP-alpha-D-glucose; it reads LVAKE.

The protein belongs to the glycosyltransferase 20 family. Homotetramer.

It catalyses the reaction ADP-alpha-D-glucose + D-glucose 6-phosphate = alpha,alpha-trehalose 6-phosphate + ADP + H(+). It carries out the reaction CDP-alpha-D-glucose + D-glucose 6-phosphate = alpha,alpha-trehalose 6-phosphate + CDP + H(+). The enzyme catalyses GDP-alpha-D-glucose + D-glucose 6-phosphate = alpha,alpha-trehalose 6-phosphate + GDP + H(+). The catalysed reaction is TDP-alpha-D-glucose + D-glucose 6-phosphate = 5-methyl-UDP + alpha,alpha-trehalose 6-phosphate + H(+). It catalyses the reaction D-glucose 6-phosphate + UDP-alpha-D-glucose = alpha,alpha-trehalose 6-phosphate + UDP + H(+). It participates in glycan biosynthesis; trehalose biosynthesis. In terms of biological role, probably involved in the osmoprotection via the biosynthesis of trehalose and in the production of glycogen and alpha-glucan via the TreS-Pep2 branch involved in the biosynthesis of maltose-1-phosphate (M1P). Catalyzes the transfer of glucose from UDP-glucose (UDP-Glc) to D-glucose 6-phosphate (Glc-6-P) to form trehalose-6-phosphate. Probably also able to use ADP-Glc, CDP-Glc, GDP-Glc and TDP-Glc as glucosyl donors. The polypeptide is Trehalose-6-phosphate synthase (Mycolicibacterium gilvum (strain PYR-GCK) (Mycobacterium gilvum (strain PYR-GCK))).